Here is a 445-residue protein sequence, read N- to C-terminus: Lipid A 1-phosphatase (445 aa).

Positions 1–22 are cleaved as a signal peptide; the sequence is MNRESFLLLLVLLFALPLHLQA.

The protein localises to the periplasm. The protein operates within bacterial outer membrane biogenesis; LPS lipid A biosynthesis. In terms of biological role, removes the 1-phosphate group from lipid A species. Absence of phosphate groups in lipid A renders the bacteria resistant to host-derived cationic antimicrobial peptides (CAMP) and allowing it to camouflage itself from the host innate immune response. This is Lipid A 1-phosphatase from Porphyromonas gingivalis (strain ATCC 33277 / DSM 20709 / CIP 103683 / JCM 12257 / NCTC 11834 / 2561).